A 482-amino-acid polypeptide reads, in one-letter code: Adenylyltransferase and sulfurtransferase uba4 (482 aa).

Residues 33–57 form a disordered region; it reads EGAALRAQSQKTASANATTGQRTKS. Positions 39–54 are enriched in polar residues; sequence AQSQKTASANATTGQR. ATP is bound by residues Gly-98, Asp-119, 126–130, Lys-143, and 187–188; these read SNLHR and DN. The Zn(2+) site is built by Cys-236 and Cys-239. Cys-253 serves as the catalytic Glycyl thioester intermediate; for adenylyltransferase activity. Zn(2+) is bound by residues Cys-315 and Cys-318. A Rhodanese domain is found at 366 to 480; the sequence is AGAQRHIIDV…WREQVDPDWP (115 aa). The active-site Cysteine persulfide intermediate; for sulfurtransferase activity is the Cys-435.

It in the N-terminal section; belongs to the HesA/MoeB/ThiF family. UBA4 subfamily. The cofactor is Zn(2+).

Its subcellular location is the cytoplasm. It localises to the cytosol. The enzyme catalyses [molybdopterin-synthase sulfur-carrier protein]-C-terminal Gly-Gly + ATP + H(+) = [molybdopterin-synthase sulfur-carrier protein]-C-terminal Gly-Gly-AMP + diphosphate. It catalyses the reaction [molybdopterin-synthase sulfur-carrier protein]-C-terminal Gly-Gly-AMP + S-sulfanyl-L-cysteinyl-[cysteine desulfurase] + AH2 = [molybdopterin-synthase sulfur-carrier protein]-C-terminal-Gly-aminoethanethioate + L-cysteinyl-[cysteine desulfurase] + A + AMP + 2 H(+). It functions in the pathway tRNA modification; 5-methoxycarbonylmethyl-2-thiouridine-tRNA biosynthesis. It participates in cofactor biosynthesis; molybdopterin biosynthesis. Functionally, plays a central role in 2-thiolation of mcm(5)S(2)U at tRNA wobble positions of cytosolic tRNA(Lys), tRNA(Glu) and tRNA(Gln). Also essential during biosynthesis of the molybdenum cofactor. Acts by mediating the C-terminal thiocarboxylation of sulfur carriers urm1 and mocs2a. Its N-terminus first activates urm1 and mocs2a as acyl-adenylates (-COAMP), then the persulfide sulfur on the catalytic cysteine is transferred to urm1 and mocs2a to form thiocarboxylation (-COSH) of their C-terminus. The reaction probably involves hydrogen sulfide that is generated from the persulfide intermediate and that acts as a nucleophile towards urm1 and mocs2a. Subsequently, a transient disulfide bond is formed. Does not use thiosulfate as sulfur donor; nfs1 probably acting as a sulfur donor for thiocarboxylation reactions. The polypeptide is Adenylyltransferase and sulfurtransferase uba4 (Emericella nidulans (strain FGSC A4 / ATCC 38163 / CBS 112.46 / NRRL 194 / M139) (Aspergillus nidulans)).